A 353-amino-acid chain; its full sequence is Colistin resistance protein EmrA (353 aa).

Residues 21–41 form a helical membrane-spanning segment; that stretch reads WGVFSVLLLFLVAGILYYFFV. Residues 132 to 204 adopt a coiled-coil conformation; the sequence is VVAAQADLAR…QASRAQLLAD (73 aa).

Belongs to the membrane fusion protein (MFP) (TC 8.A.1) family.

The protein localises to the cell inner membrane. Functionally, probably part of an efflux pump system that contributes to adaptation to osmotic stress and resistance to colistin. This Acinetobacter baumannii (strain ATCC 17978 / DSM 105126 / CIP 53.77 / LMG 1025 / NCDC KC755 / 5377) protein is Colistin resistance protein EmrA.